Consider the following 166-residue polypeptide: Phospholipase A2 inhibitor (166 aa).

Residues 1 to 19 (MRLILLSGLLLLGIFLANG) form the signal peptide. Residues 46–161 (LKGSFLIVHK…CDDNLLVVCE (116 aa)) form the C-type lectin domain. 2 disulfide bridges follow: Cys-83–Cys-160 and Cys-138–Cys-152. N-linked (GlcNAc...) asparagine glycosylation is present at Asn-122.

It belongs to the alpha-type phospholipase A2 inhibitor family. Homotrimer; non-covalently linked. As to expression, expressed by the liver.

It is found in the secreted. This phospholipase A2 inhibitor binds directly phospholipase A2 in the presence or absence of calcium. This chain is Phospholipase A2 inhibitor, found in Bothrops jararacussu (Jararacussu).